A 495-amino-acid polypeptide reads, in one-letter code: Serine/threonine-protein phosphatase 2A regulatory subunit sur-6 (495 aa).

Positions 1–27 are disordered; sequence MVMEVDEPAVAATTSQNQPQEHANDFD. Residues 12 to 21 show a composition bias toward polar residues; the sequence is ATTSQNQPQE. 6 WD repeats span residues 64-103, 130-171, 215-253, 264-304, 323-361, and 378-419; these read TEAD…KYVK, EIDE…RKIG, AHTY…ESFN, ELTE…LCDA, EIIA…QPVE, and ENDS…DAKT. Residues 439–459 form a disordered region; the sequence is SAKRKRNNLSSSGETTEEDLS. The WD 7 repeat unit spans residues 464-495; sequence QFDRKILHTAWHPKDNIIALAATNNLYIFSDV.

It belongs to the phosphatase 2A regulatory subunit B family. In terms of assembly, part of a complex consisting of a common heterodimeric core enzyme, composed of catalytic subunit let-92 and constant regulatory subunit paa-1, that associates with a variety of regulatory subunits which confer distinct properties to the holoenzyme. Interacts with let-92.

The protein resides in the cytoplasm. Probable regulatory subunit of serine/threonine phosphatase let-92. Together with let-92 and constant regulatory subunit paa-1, positively regulates centriole duplication during early embryonic cell divisions by preventing the degradation of sas-5 and kinase zyg-1. In addition, during vulva development, may play a role with phosphatase let-92 and regulatory subunit paa-1 in the induction of vulva cell precursors by positively regulating let-60/Ras-MAP kinase signaling, probably by promoting lin-45 activation. In intestinal epithelial cells, may play a role in the late secretory pathway probably by regulating the exocyst, a protein complex involved in targeting secretory vesicles to the plasma membrane. The polypeptide is Serine/threonine-protein phosphatase 2A regulatory subunit sur-6 (Caenorhabditis elegans).